The chain runs to 96 residues: Class I hydrophobin 2 (96 aa).

The N-terminal stretch at 1–15 (MFKALIVALAAVAAA) is a signal peptide. Cystine bridges form between Cys-28–Cys-77, Cys-34–Cys-71, Cys-35–Cys-55, and Cys-78–Cys-91.

The protein belongs to the fungal hydrophobin family.

It is found in the secreted. The protein resides in the cell wall. Its function is as follows. Aerial growth, conidiation, and dispersal of filamentous fungi in the environment rely upon a capability of their secreting small amphipathic proteins called hydrophobins (HPBs) with low sequence identity. Class I can self-assemble into an outermost layer of rodlet bundles on aerial cell surfaces, conferring cellular hydrophobicity that supports fungal growth, development and dispersal; whereas Class II form highly ordered films at water-air interfaces through intermolecular interactions but contribute nothing to the rodlet structure. Hyd2 plays a neglectable role in hyphal growth and asexual development and does not seem involved in cellular hydrophobicity, conidial adhesion, stress tolerance nor insect pathogenicity. The sequence is that of Class I hydrophobin 2 from Metarhizium robertsii (strain ARSEF 23 / ATCC MYA-3075) (Metarhizium anisopliae (strain ARSEF 23)).